A 588-amino-acid polypeptide reads, in one-letter code: Adenine deaminase (588 aa).

Belongs to the metallo-dependent hydrolases superfamily. Adenine deaminase family. Homodimer. It depends on Mn(2+) as a cofactor.

The catalysed reaction is adenine + H2O + H(+) = hypoxanthine + NH4(+). The polypeptide is Adenine deaminase (Escherichia coli (strain K12 / DH10B)).